The primary structure comprises 337 residues: Heme A synthase (337 aa).

Transmembrane regions (helical) follow at residues 6-26 (ITKW…IGGI), 93-113 (GRIT…KDVI), 118-138 (ILPY…GWYM), 154-174 (LAFH…QLIK), and 192-212 (LIFS…GAMV). His-256 lines the heme pocket. The next 3 helical transmembrane spans lie at 258 to 278 (LGGY…LKIE), 285 to 305 (IAYF…ITLL), and 308 to 328 (VPII…SIII). A heme-binding site is contributed by His-316.

This sequence belongs to the COX15/CtaA family. Type 2 subfamily. As to quaternary structure, interacts with CtaB. The cofactor is heme b.

Its subcellular location is the cell membrane. The enzyme catalyses Fe(II)-heme o + 2 A + H2O = Fe(II)-heme a + 2 AH2. The protein operates within porphyrin-containing compound metabolism; heme A biosynthesis; heme A from heme O: step 1/1. In terms of biological role, catalyzes the conversion of heme O to heme A by two successive hydroxylations of the methyl group at C8. The first hydroxylation forms heme I, the second hydroxylation results in an unstable dihydroxymethyl group, which spontaneously dehydrates, resulting in the formyl group of heme A. The chain is Heme A synthase from Rickettsia felis (strain ATCC VR-1525 / URRWXCal2) (Rickettsia azadi).